The chain runs to 612 residues: Protein cereblon (612 aa).

Over residues 1-11 (MDDEETAEIED) the composition is skewed to acidic residues. Disordered stretches follow at residues 1–30 (MDDE…GASA), 58–133 (MELI…NPHP), and 181–211 (QERR…PYDV). Residues 69 to 81 (AADAPDAAASTGS) show a composition bias toward low complexity. Residues 181 to 190 (QERRRSRTSE) are compositionally biased toward basic and acidic residues. The Lon N-terminal domain occupies 250–478 (HMLIFLHQHI…IIGSTLKDES (229 aa)). Residues 477–586 (ESVFYCRYCN…LAGSSVRIGK (110 aa)) enclose the CULT domain. The Zn(2+) site is built by C482, C485, C551, and C554.

This sequence belongs to the CRBN family. In terms of assembly, likely a component of a DCX (DDB1-CUL4-X-box) protein ligase complex. May interact with pic/DDB1. Ubiquitinated.

Its subcellular location is the nucleus. It functions in the pathway protein modification; protein ubiquitination. Substrate recognition component of a DCX (DDB1-CUL4-X-box) E3 protein ligase complex that mediates the ubiquitination and subsequent proteasomal degradation of target proteins. Has an essential role in mediating growth by negatively regulating insulin signaling. It also has a role in maintaining presynaptic function in the neuromuscular junction synapses of third-instar larvae. The protein is Protein cereblon of Drosophila willistoni (Fruit fly).